We begin with the raw amino-acid sequence, 553 residues long: Heterochromatin protein 1-binding protein 3 (553 aa).

An N-acetylalanine modification is found at Ala2. Residue Ser6 is modified to Phosphoserine. Disordered regions lie at residues 29-134 (KLGE…KTIP) and 140-159 (SASQ…SPRP). Residue Thr51 is modified to Phosphothreonine. The segment covering 60-71 (GEEEKPEPDISS) has biased composition (acidic residues). Lys64 participates in a covalent cross-link: Glycyl lysine isopeptide (Lys-Gly) (interchain with G-Cter in SUMO2). Thr85 is modified (phosphothreonine). Residues 94-127 (EQPKGEPENEEKEENKSSEETKKDEKDQSKEKEK) show a composition bias toward basic and acidic residues. Residue Lys97 forms a Glycyl lysine isopeptide (Lys-Gly) (interchain with G-Cter in SUMO2) linkage. The segment covering 140-154 (SASQLARAQKQTPMA) has biased composition (polar residues). Phosphoserine is present on residues Ser142, Ser155, and Ser156. The 76-residue stretch at 157 to 232 (PRPKMDAILT…GASGSFVVVQ (76 aa)) folds into the H15 1 domain. An N6-acetyllysine modification is found at Lys190. The disordered stretch occupies residues 230–255 (VVQKSRKTPQKSRNRKNRSSAVDPEP). Residues 233 to 247 (KSRKTPQKSRNRKNR) show a composition bias toward basic residues. Phosphoserine is present on residues Ser248 and Ser249. A PxVxL motif motif is present at residues 255 to 259 (PQVKL). H15 domains are found at residues 255-330 (PQVK…QLKK) and 337-413 (LGGS…QLCF). A Glycyl lysine isopeptide (Lys-Gly) (interchain with G-Cter in SUMO2) cross-link involves residue Lys258. Residues 422–553 (LFPKKEPDDS…TMKKSFRVKK (132 aa)) are disordered. Residues 430–450 (DSRDEDEDEDESSEEDSEDEE) show a composition bias toward acidic residues. A phosphoserine mark is found at Ser441, Ser442, and Ser446. Residues 489–510 (GKARPLPKKAPPKAKTPAKKTR) are compositionally biased toward basic residues. Over residues 517-527 (KKPSGGSSKKP) the composition is skewed to low complexity. Residues 543-553 (STMKKSFRVKK) are compositionally biased toward basic residues.

As to quaternary structure, interacts (via PxVxL motif) with CBX5 (via Trp-174).

It localises to the nucleus. Its subcellular location is the chromosome. In terms of biological role, component of heterochromatin that maintains heterochromatin integrity during G1/S progression and regulates the duration of G1 phase to critically influence cell proliferative capacity. Mediates chromatin condensation during hypoxia, leading to increased tumor cell viability, radio-resistance, chemo-resistance and self-renewal. The protein is Heterochromatin protein 1-binding protein 3 (HP1BP3) of Homo sapiens (Human).